The sequence spans 157 residues: Phosphopantetheine adenylyltransferase (157 aa).

Position 8 (S8) interacts with substrate. Residues 8–9 and H16 each bind ATP; that span reads SF. The substrate site is built by K40, L72, and R86. ATP-binding positions include 87–89, E97, and 121–127; these read GLR and FGTISSS.

It belongs to the bacterial CoaD family. In terms of assembly, homohexamer. Requires Mg(2+) as cofactor.

Its subcellular location is the cytoplasm. The enzyme catalyses (R)-4'-phosphopantetheine + ATP + H(+) = 3'-dephospho-CoA + diphosphate. It functions in the pathway cofactor biosynthesis; coenzyme A biosynthesis; CoA from (R)-pantothenate: step 4/5. Its function is as follows. Reversibly transfers an adenylyl group from ATP to 4'-phosphopantetheine, yielding dephospho-CoA (dPCoA) and pyrophosphate. The chain is Phosphopantetheine adenylyltransferase from Cutibacterium acnes (strain DSM 16379 / KPA171202) (Propionibacterium acnes).